We begin with the raw amino-acid sequence, 2170 residues long: Supervillin (2170 aa).

The tract at residues 1 to 167 is interaction with MYLK; the sequence is MKRKERIARR…NSRHSRTESG (167 aa). Disordered regions lie at residues 37–94, 107–327, 413–444, 511–546, and 567–643; these read EDTP…HSLE, RRRQ…QSES, PEPLERSPKSLLTSEDDRLVRGHKDPSGNKDL, DYTGPPQLQVPRHKDEAPSQELELQSSRAEGPGAEA, and RASK…EDEE. At Ser50 the chain carries Phosphoserine. Composition is skewed to polar residues over residues 63-73 and 81-90; these read PGSSLEKQTPS and GIHSSGSMDT. Residues 134 to 166 are compositionally biased toward basic and acidic residues; that stretch reads SRKDPDVTERRGKSDKQEEQSKDANSRHSRTES. Residues 167-195 show a composition bias toward polar residues; the sequence is GPRTSLVASQDCTPLGSNMSDQEQLLNVE. Phosphoserine is present on residues Ser220, Ser227, and Ser241. Residues 230 to 241 show a composition bias toward polar residues; the sequence is QIPSSPLQQPAS. 2 stretches are compositionally biased toward basic and acidic residues: residues 261-272 and 286-297; these read PTHEWFLQRDSE and KVREKLVKEESA. Over residues 298-313 the composition is skewed to polar residues; that stretch reads RSSPELTSESLTQRRQ. Residues Ser299 and Ser300 each carry the phosphoserine modification. Over residues 427–444 the composition is skewed to basic and acidic residues; it reads EDDRLVRGHKDPSGNKDL. Basic and acidic residues-rich tracts occupy residues 570–582 and 606–615; these read KKPELQSRVERSA and ESRKTSERFR. 4 positions are modified to phosphoserine: Ser632, Ser666, Ser728, and Ser761. Positions 743–771 are disordered; sequence ASAHQKALARDQANEGRESAEPGEPDSST. Residues 750–762 are compositionally biased toward basic and acidic residues; sequence LARDQANEGRESA. At Tyr809 the chain carries Phosphotyrosine. Residue Thr811 is modified to Phosphothreonine. Phosphoserine occurs at positions 857, 877, and 881. The tract at residues 887-909 is disordered; the sequence is AWRPLVEHSGSKGMPGESGKTES. A phosphoserine mark is found at Ser960, Ser1011, Ser1031, and Ser1077. Residues 1117 to 1137 are disordered; the sequence is HTQEVEQSLKKKRVTESRESQ. The span at 1119–1137 shows a compositional bias: basic and acidic residues; that stretch reads QEVEQSLKKKRVTESRESQ. The residue at position 1159 (Arg1159) is an Omega-N-methylarginine. A phosphoserine mark is found at Ser1181 and Ser1184. The residue at position 1186 (Thr1186) is a Phosphothreonine. Ser1190, Ser1278, and Ser1361 each carry phosphoserine. An interaction with NEB region spans residues 1375–1643; sequence SNINLRSVNL…KFLDWTELKR (269 aa). 5 Gelsolin-like repeats span residues 1397 to 1496, 1516 to 1638, 1708 to 1818, 1837 to 1938, and 1971 to 2078; these read KKLM…LGGQ, IETN…FLDW, VSVD…FQGG, WRLY…LGRR, and ATEF…FPSW. Residues 2107–2170 enclose the HP domain; the sequence is KLCKTIYPLA…VNLKKSKGLF (64 aa).

It belongs to the villin/gelsolin family. In terms of assembly, associates with F-actin. Interacts with NEB. Interacts with MYH9. Interacts with MYLK. Interacts with TASOR. As to quaternary structure, interacts with TRIP6. Interacts with DYNLT1. Interacts with KIF14; at midbody during cytokinesis. As to expression, expressed in the heart, tongue and granular cells within the cerebellum.

It is found in the cell membrane. It localises to the cytoplasm. The protein resides in the cytoskeleton. The protein localises to the cell projection. Its subcellular location is the invadopodium. It is found in the podosome. It localises to the midbody. The protein resides in the cleavage furrow. Forms a high-affinity link between the actin cytoskeleton and the membrane. Is among the first costameric proteins to assemble during myogenesis and it contributes to myogenic membrane structure and differentiation. Appears to be involved in myosin II assembly. May modulate myosin II regulation through MLCK during cell spreading, an initial step in cell migration. May play a role in invadopodial function. Functionally, may be involved in modulation of focal adhesions. Supervillin-mediated down-regulation of focal adhesions involves binding to TRIP6. Plays a role in cytokinesis through KIF14 interaction. The sequence is that of Supervillin (Svil) from Mus musculus (Mouse).